The following is a 267-amino-acid chain: Orotidine 5'-phosphate decarboxylase (267 aa).

The Proton donor role is filled by lysine 93.

It belongs to the OMP decarboxylase family. Type 2 subfamily.

The enzyme catalyses orotidine 5'-phosphate + H(+) = UMP + CO2. It participates in pyrimidine metabolism; UMP biosynthesis via de novo pathway; UMP from orotate: step 2/2. This is Orotidine 5'-phosphate decarboxylase from Herpetosiphon aurantiacus (strain ATCC 23779 / DSM 785 / 114-95).